The sequence spans 374 residues: Lipopolysaccharide glucosyltransferase WaaG (374 aa).

UDP-alpha-D-glucose is bound by residues Gly-15 and Asp-19. Residues 103 to 132 are membrane-interacting region; that stretch reads YAEKVAQEKGFLYRLTSRYRHYAAFERATF. The UDP-alpha-D-glucose site is built by Arg-173, Arg-208, Lys-209, Arg-261, Glu-281, Ala-283, Gly-284, Ile-285, Val-286, and Glu-289.

Belongs to the glycosyltransferase group 1 family. Glycosyltransferase 4 subfamily.

Its subcellular location is the cell inner membrane. Its pathway is bacterial outer membrane biogenesis; LPS core biosynthesis. Its activity is regulated as follows. Inhibited by divalent metal ions such as Mg(2+), Mn(2+), Ca(2+), Zn(2+), Co(2+), Ni(2+) and Cu(2+). In terms of biological role, glucosyltransferase involved in the biosynthesis of the core oligosaccharide region of lipopolysaccharide (LPS). Catalyzes the addition of the first outer-core glucose from UDP-glucose to the inner-core heptose II. Cannot use other sugar donors, such as UDP-galactose, UDP-glucuronic acid, UDP-galacuronic acid, GDP-mannose, ADP-glucose and GDP-glucose. In the absence of a lipid acceptor, can slowly hydrolyze UDP-glucose. The sequence is that of Lipopolysaccharide glucosyltransferase WaaG from Escherichia coli (strain K12).